Consider the following 132-residue polypeptide: Small ribosomal subunit protein uS11 (132 aa).

This sequence belongs to the universal ribosomal protein uS11 family. In terms of assembly, part of the 30S ribosomal subunit. Interacts with proteins S7 and S18. Binds to IF-3.

Located on the platform of the 30S subunit, it bridges several disparate RNA helices of the 16S rRNA. Forms part of the Shine-Dalgarno cleft in the 70S ribosome. This is Small ribosomal subunit protein uS11 from Legionella pneumophila (strain Corby).